We begin with the raw amino-acid sequence, 356 residues long: MFPSRLLEKWWLRAFIALVIFFVWQLFYAINRVQSLEEERATLQATIEVLTRKSDGLRTQIFEKERNLVRLNGKVEEIDTQIRDHLSLLPRVNRSTPFIYFITPTHFRAAQRADLTRLSYTLSHVPNLHWIVVEDSDELTPSIAGILKRSKIPNTHLNARTPSDQKMRYDDPNWTLPRGVEQRNRALLWIQNQLSGVKEGVVYFGDDDNTYDLKIFGEMRKVKNAGVWPVGIVGGMFVETPILEKNGSISHFNAVWKPERPFPIDMAAFAVNISLVLSNANALFSFDVPRGYQESTFLENLGIHRYNMEPLAEMCTKVYVWHTRTEKPKLSKESIDRLTKKTGFNSLEAHALGVDN.

At 1-9 (MFPSRLLEK) the chain is on the cytoplasmic side. Residues 10–30 (WWLRAFIALVIFFVWQLFYAI) traverse the membrane as a helical; Signal-anchor for type II membrane protein segment. Residues 31-356 (NRVQSLEEER…LEAHALGVDN (326 aa)) lie on the Lumenal side of the membrane. Asparagine 93 and asparagine 173 each carry an N-linked (GlcNAc...) asparagine glycan. Mn(2+) is bound at residue aspartate 208. N-linked (GlcNAc...) asparagine glycans are attached at residues asparagine 246 and asparagine 272. Catalysis depends on glutamate 294, which acts as the Proton acceptor.

Belongs to the glycosyltransferase 43 family.

It localises to the membrane. It carries out the reaction 3-O-(beta-D-galactosyl-(1-&gt;3)-beta-D-galactosyl-(1-&gt;4)-beta-D-xylosyl)-L-seryl-[protein] + UDP-alpha-D-glucuronate = 3-O-(beta-D-GlcA-(1-&gt;3)-beta-D-Gal-(1-&gt;3)-beta-D-Gal-(1-&gt;4)-beta-D-Xyl)-L-seryl-[protein] + UDP + H(+). Its function is as follows. Glycosyltransferase required for the biosynthesis of the tetrasaccharide (GlcA-Gal-Gal-Xyl-)Ser core linker of heparan sulfate and chondroitin sulfate. May be involved in the biosynthesis of the HNK-1 carbohydrate epitope on glycoproteins. Required for embryonic development. Involved in the elongation of the pharyngeal isthmus during the later stages of embryonic development. Involved in vulval epithelium invagination. This chain is Galactosylgalactosylxylosylprotein 3-beta-glucuronosyltransferase sqv-8 (sqv-8), found in Caenorhabditis elegans.